The chain runs to 170 residues: Large ribosomal subunit protein uL10 (170 aa).

The protein belongs to the universal ribosomal protein uL10 family. As to quaternary structure, part of the ribosomal stalk of the 50S ribosomal subunit. The N-terminus interacts with L11 and the large rRNA to form the base of the stalk. The C-terminus forms an elongated spine to which L12 dimers bind in a sequential fashion forming a multimeric L10(L12)X complex.

In terms of biological role, forms part of the ribosomal stalk, playing a central role in the interaction of the ribosome with GTP-bound translation factors. In Novosphingobium aromaticivorans (strain ATCC 700278 / DSM 12444 / CCUG 56034 / CIP 105152 / NBRC 16084 / F199), this protein is Large ribosomal subunit protein uL10.